A 306-amino-acid polypeptide reads, in one-letter code: Protein SULFUR DEFICIENCY-INDUCED 1 (306 aa).

5 TPR repeats span residues 1 to 22 (MERS…NLMK), 71 to 104 (DSAL…CSKN), 107 to 140 (DSLD…IYQG), 167 to 200 (SRLL…EPDA), and 202 to 233 (KSCN…RVLG). Positions 72 to 139 (SALKDMAVVM…LKRKLRQIYQ (68 aa)) form a coiled coil. Positions 238 to 260 (RTRQRAEELLSELESSLPRMRDA) form a coiled coil. Residues 270-304 (LDDDFVLGLEEMTSTSFKSKRLPIFEQISSFRNTL) form a TPR 6 repeat.

The protein belongs to the MS5 protein family.

Its subcellular location is the nucleus. Its function is as follows. Involved in the utilization of stored sulfate under sulfur-deficient conditions. This Arabidopsis thaliana (Mouse-ear cress) protein is Protein SULFUR DEFICIENCY-INDUCED 1.